Consider the following 425-residue polypeptide: Metalloprotease AF_0655 (425 aa).

The protein belongs to the peptidase U62 family.

Its function is as follows. Probable metalloprotease. The polypeptide is Metalloprotease AF_0655 (Archaeoglobus fulgidus (strain ATCC 49558 / DSM 4304 / JCM 9628 / NBRC 100126 / VC-16)).